The sequence spans 147 residues: Signal peptidase complex subunit 3 (147 aa).

The Cytoplasmic portion of the chain corresponds to methionine 1–glutamine 6. Residues arginine 7 to leucine 29 traverse the membrane as a helical; Signal-anchor for type II membrane protein segment. At aspartate 30 to serine 147 the chain is on the lumenal side.

It belongs to the SPCS3 family. As to quaternary structure, component of the signal peptidase complex (SPC) composed of a catalytic subunit SEC11 and three accessory subunits SPCS1, SPCS2 and SPCS3. The complex induces a local thinning of the ER membrane which is used to measure the length of the signal peptide (SP) h-region of protein substrates. This ensures the selectivity of the complex towards h-regions shorter than 18-20 amino acids.

It is found in the endoplasmic reticulum membrane. Its function is as follows. Essential component of the signal peptidase complex (SPC) which catalyzes the cleavage of N-terminal signal sequences from nascent proteins as they are translocated into the lumen of the endoplasmic reticulum. Essential for the SPC catalytic activity, possibly by stabilizing and positioning the active center of the complex close to the lumenal surface. This is Signal peptidase complex subunit 3 from Oryza sativa subsp. japonica (Rice).